The sequence spans 80 residues: Exodeoxyribonuclease 7 small subunit (80 aa).

Belongs to the XseB family. In terms of assembly, heterooligomer composed of large and small subunits.

The protein localises to the cytoplasm. The enzyme catalyses Exonucleolytic cleavage in either 5'- to 3'- or 3'- to 5'-direction to yield nucleoside 5'-phosphates.. Bidirectionally degrades single-stranded DNA into large acid-insoluble oligonucleotides, which are then degraded further into small acid-soluble oligonucleotides. The chain is Exodeoxyribonuclease 7 small subunit from Pseudomonas putida (strain ATCC 700007 / DSM 6899 / JCM 31910 / BCRC 17059 / LMG 24140 / F1).